The following is a 1349-amino-acid chain: MACYLVISSRHLSNGHYRGIKGVFRGPLCKNGSPSPDFAEKKSTAKALEDVKANFYCELCDKQYHKHQEFDNHINSYDHAHKQRLKELKQREFARNVASKSWKDEKKQEKALKRLHQLAELRQQSECVSGNGPAYKAPRVAIEKQLQQGIFPIKNGRKVSCMKSALLLKGKNLPRIISDKQRSTMPNRHQLQSDRRCLFGNQVLQTSSDLSNANHRTGVSFTFSKKVHLKLESSASVFSENTEETHDCNKSPIYKTKQTADKCKCCRFANKDTHLTKEKEVNISPSHLESVLHNTISINSKILQDKHDSIDETLEDSIGIHASFSKSNIHLSDVDFTPTSREKETRNTLKNTLENCVNHPCQANASFSPPNIYNHSDARISECLDEFSSLEPSEQKSTVHLNPNSRIENREKSLDKTERVSKNVQRLVKEACTHNVASKPLPFLHVQSKDGHTTLQWPTELLLFTKTEPCISYGCNPLYFDFKLSRNTKEDHNLEDLKTELGKKPLELKTKRESQVSGLTEDQQKLIQEDYQYPKPKTMIANPDWEKFQRKYNLDYSDSEPNKSEYTFSANDLEMKNPKVPLYLNTSLKDCAGKNNSSENKLKEASRAHWQGCRKAVLNDIDEDLSFPSYISRFKKHKLIPCSPHLEFEDERQFNCKSSPCTVGGHSDHGKDFSVILKSNHISMTSKVSGCGNQRYKRYSPQSCLSRYSSSLDTSPSSMSSLRSTCSSHRFNGNSRGNLLCFHKREHHSVERHKRKCLKHNCFYLSDDITKSSQMQSEPQKERNCKLWESFKNEKYSKRRYCHCRERQKLGKNQQQFSGLKSTRIIYCDSNSQISCTGSSKKPPNCQGTQHDRLDSYSIEKMYYLNKSKRNQESLGSPHICDLGKVRPMKCNSGNISCLLKNCSSGPSETTESNTAEGERTPLTAKILLERVQAKKCQEQSSNVEISSNSCKSELEAPSQVPCTIQLAPSGCNRQALPLSEKIQYASESRNDQDSAIPRTTEKDKSKSSHTNNFTILADTDCDNHLSKGIIHLVTESQSLNIKRDATTKEQSKPLISEIQPFIQSCDPVPNEFPGAFPSNKYTGVTDSTETQEDQINLDLQDVSMHINHVEGNINSYYDRTMQKPDKVEDGLEMCHKSISPPLIQQPITFSPDEIDKYKILQLQAQQHMQKQLLSKHLRVLPAAGPTAFSPASTVQTVPVHQHTSITTIHHTFLQHFAVSASLSSHSSHLPIAHLHPLSQAHFSPISFSTLTPTIIPAHPTFLAGHPLHLVAATPFHPSHITLQPLPPTAFIPTLFGPHLNPATTSIIHLNPLIQPVFQGQDFCHHSCSSQMQQLNEVKEALNVSTHLN.

The C2H2-type zinc-finger motif lies at 55–79 (FYCELCDKQYHKHQEFDNHINSYDH). The tract at residues 985–1010 (YASESRNDQDSAIPRTTEKDKSKSSH) is disordered.

This is Zinc finger protein 804B (ZNF804B) from Homo sapiens (Human).